Reading from the N-terminus, the 386-residue chain is Aspartate carbamoyltransferase 1, chloroplastic (386 aa).

A chloroplast-targeting transit peptide spans 1-39 (MTVASMLSSNSMNVGVSNPKMSSKTSACCLLNRPWPSSC). Residues Arg-132 and Thr-133 each contribute to the carbamoyl phosphate site. UMP-binding residues include Arg-132 and Thr-133. Lys-162 contributes to the L-aspartate binding site. Carbamoyl phosphate contacts are provided by Arg-183, His-211, and Gln-214. Residues Arg-183 and His-211 each coordinate UMP. UMP-binding residues include Arg-244 and Arg-306. L-aspartate is bound by residues Arg-244 and Arg-306. 2 residues coordinate carbamoyl phosphate: Leu-346 and Pro-347.

It belongs to the aspartate/ornithine carbamoyltransferase superfamily. ATCase family. In terms of assembly, homotrimer.

It localises to the plastid. The protein resides in the chloroplast. The catalysed reaction is carbamoyl phosphate + L-aspartate = N-carbamoyl-L-aspartate + phosphate + H(+). The protein operates within pyrimidine metabolism; UMP biosynthesis via de novo pathway; (S)-dihydroorotate from bicarbonate: step 2/3. Feedback inhibited by UMP. Its function is as follows. Catalyzes the condensation of carbamoyl phosphate and aspartate to form carbamoyl aspartate and inorganic phosphate, the committed step in the de novo pyrimidine nucleotide biosynthesis pathway. The polypeptide is Aspartate carbamoyltransferase 1, chloroplastic (PYRB1) (Pisum sativum (Garden pea)).